Consider the following 803-residue polypeptide: Exocyst complex component 6 (803 aa).

Belongs to the SEC15 family. In terms of assembly, the exocyst complex is composed of EXOC1, EXOC2, EXOC3, EXOC4, EXOC5, EXOC6, EXOC7 and EXOC8. Interacts with CNTRL. Interacts with RAB11A in a GTP-dependent manner.

It is found in the cytoplasm. The protein resides in the perinuclear region. The protein localises to the cell projection. Its subcellular location is the growth cone. It localises to the midbody. It is found in the midbody ring. Component of the exocyst complex involved in the docking of exocytic vesicles with fusion sites on the plasma membrane. Together with RAB11A, RAB3IP, RAB8A, PARD3, PRKCI, ANXA2, CDC42 and DNMBP promotes transcytosis of PODXL to the apical membrane initiation sites (AMIS), apical surface formation and lumenogenesis. This chain is Exocyst complex component 6 (EXOC6), found in Canis lupus familiaris (Dog).